The chain runs to 122 residues: Probable F-box protein At4g23960 (122 aa).

One can recognise an F-box domain in the interval 1–45; sequence MIEQLFPEVTCYALRYLDYSSLCQLSMTSSSMRKTANDDVLWRAL.

The protein is Probable F-box protein At4g23960 of Arabidopsis thaliana (Mouse-ear cress).